The sequence spans 655 residues: 1-deoxy-D-xylulose-5-phosphate synthase (655 aa).

Thiamine diphosphate-binding positions include His-73 and 114-116 (SHA). Mg(2+) is bound at residue Asp-145. Residues 146–147 (GA), Asn-174, Tyr-285, and Glu-367 contribute to the thiamine diphosphate site. Mg(2+) is bound at residue Asn-174. The disordered stretch occupies residues 626-655 (RQPAIEDDPTSPGEAAPAGERAGEAIGDQR). Positions 646-655 (RAGEAIGDQR) are enriched in basic and acidic residues.

Belongs to the transketolase family. DXPS subfamily. Homodimer. Mg(2+) serves as cofactor. The cofactor is thiamine diphosphate.

The enzyme catalyses D-glyceraldehyde 3-phosphate + pyruvate + H(+) = 1-deoxy-D-xylulose 5-phosphate + CO2. Its pathway is metabolic intermediate biosynthesis; 1-deoxy-D-xylulose 5-phosphate biosynthesis; 1-deoxy-D-xylulose 5-phosphate from D-glyceraldehyde 3-phosphate and pyruvate: step 1/1. Catalyzes the acyloin condensation reaction between C atoms 2 and 3 of pyruvate and glyceraldehyde 3-phosphate to yield 1-deoxy-D-xylulose-5-phosphate (DXP). The chain is 1-deoxy-D-xylulose-5-phosphate synthase from Frankia casuarinae (strain DSM 45818 / CECT 9043 / HFP020203 / CcI3).